A 1097-amino-acid chain; its full sequence is Protease Do-like 7 (1097 aa).

The segment at 55-243 (VLRTTACRAF…LPLQRVVRAL (189 aa)) is serine protease. Residues 269-366 (MTFLHKGFDE…RGGQPLSVSV (98 aa)) enclose the PDZ domain. Catalysis depends on histidine 524, which acts as the Charge relay system. The span at 546 to 556 (TSSGDGSQNDF) shows a compositional bias: polar residues. Residues 546–577 (TSSGDGSQNDFGSEAKKQRVDEDSSDGIAANG) are disordered. Residues 558 to 567 (SEAKKQRVDE) show a composition bias toward basic and acidic residues. Serine 785 (charge relay system) is an active-site residue.

It belongs to the peptidase S1C family.

Its subcellular location is the cytoplasm. Its function is as follows. Probable serine protease. The chain is Protease Do-like 7 (DEGP7) from Arabidopsis thaliana (Mouse-ear cress).